A 166-amino-acid chain; its full sequence is Cyclic pyranopterin monophosphate synthase (166 aa).

Substrate-binding positions include 75–77 (MCH) and 115–116 (ME). Asp130 is a catalytic residue.

Belongs to the MoaC family. In terms of assembly, homohexamer; trimer of dimers.

The catalysed reaction is (8S)-3',8-cyclo-7,8-dihydroguanosine 5'-triphosphate = cyclic pyranopterin phosphate + diphosphate. Its pathway is cofactor biosynthesis; molybdopterin biosynthesis. In terms of biological role, catalyzes the conversion of (8S)-3',8-cyclo-7,8-dihydroguanosine 5'-triphosphate to cyclic pyranopterin monophosphate (cPMP). This is Cyclic pyranopterin monophosphate synthase from Shouchella clausii (strain KSM-K16) (Alkalihalobacillus clausii).